The following is a 789-amino-acid chain: MEKINVLVVGNGGREHALVWKLAQSPWAKHIFVAPGNGGFSKLENVTSVPIGSSPSDFGSLVDFATKHNVGLVIPGPEQPLVDGITTWFQKAGIPVFGPSAKAARMEGSKTFSKDFMKKHNIPTARYENFTDYEAAKQYIANSSHNLVIKASGIAAGKGVLIPANKQEAYEAIKEIMVNKQFGSAGDEVVIEEFLEGDELSILCISDGYSFVDLPPAQDHKRIGDGDTGLNTGGMGAYSPAPIGTPSLLEKIRKNILKPTIDGMRKDGYPMVGCLFVGVMVTPDGDPKVLEYNVRFGDPETQTVLPLLKSDLLELMLATVEHRLDSVDFQVHADKYSTTVVVAAGGYPESYRKGDEITVKEPLPENTFIFHAGTKEENGKVVTAGGRVIAATAIADTLEEAVKKAYVGVDHISFKDKYNRTDIAHRAFKEKPKNKVSLTYEDAGVSVDAGNQLVEKIKKSVKSTKRPGADSEIGGFGGLFDLQRAGYTDINNTLLVAATDGVGTKLRVAQIMDIHNTVGIDLVAMNVNDLVVQGAEPLMFLDYFATAHLDIKVAADFVEGVADGCKLSGCALVGGETSEMPGMYAPGHYDTNGTAVGAVLKENILPKKDKMNAGDVLLGIASDGVHSNGFSLIRKIIETTDYSYTDPAPWNPKSTIGEEVLIPTRIYVKQLLPATRRGLILGLAHITGGGLVENIPRAIPDNLSAEVDMTTWNVPEIFKWLGKTGGVPINDILKTLNMGIGMVAIVKPENVEEVIKVLKEAGETVYTIGKLVERKDLPGCTIKNSEDLY.

A GARS region spans residues 1–428 (MEKINVLVVG…NRTDIAHRAF (428 aa)). The ATP-grasp domain maps to 114 to 321 (KDFMKKHNIP…LLELMLATVE (208 aa)). 140-201 (IANSSHNLVI…EEFLEGDELS (62 aa)) is a binding site for ATP. Mg(2+) contacts are provided by glutamate 291 and asparagine 293. The AIRS stretch occupies residues 438 to 773 (LTYEDAGVSV…TVYTIGKLVE (336 aa)).

It in the N-terminal section; belongs to the GARS family. The protein in the C-terminal section; belongs to the AIR synthase family. Mg(2+) is required as a cofactor. The cofactor is Mn(2+).

It is found in the cytoplasm. The protein resides in the cytosol. It catalyses the reaction 2-formamido-N(1)-(5-O-phospho-beta-D-ribosyl)acetamidine + ATP = 5-amino-1-(5-phospho-beta-D-ribosyl)imidazole + ADP + phosphate + H(+). The enzyme catalyses 5-phospho-beta-D-ribosylamine + glycine + ATP = N(1)-(5-phospho-beta-D-ribosyl)glycinamide + ADP + phosphate + H(+). It functions in the pathway purine metabolism; IMP biosynthesis via de novo pathway; 5-amino-1-(5-phospho-D-ribosyl)imidazole from N(2)-formyl-N(1)-(5-phospho-D-ribosyl)glycinamide: step 2/2. The protein operates within purine metabolism; IMP biosynthesis via de novo pathway; N(1)-(5-phospho-D-ribosyl)glycinamide from 5-phospho-alpha-D-ribose 1-diphosphate: step 2/2. In terms of biological role, catalyzes the second and fifth step in the 'de novo' purine biosynthesis pathway; contains phosphoribosylamine--glycine ligase (GARS) and phosphoribosylformylglycinamidine cyclo-ligase (AIRS) activities. The chain is Bifunctional purine biosynthetic protein PUR2,5 from Pichia angusta (Yeast).